Reading from the N-terminus, the 77-residue chain is Small ribosomal subunit protein uS4 (77 aa).

The segment at 45–77 (PFGGGRPGRVKRKNQKAAAKKASGGDGDEEDEE) is disordered. A compositionally biased stretch (basic residues) spans 52–63 (GRVKRKNQKAAA).

It belongs to the universal ribosomal protein uS4 family.

This chain is Small ribosomal subunit protein uS4 (RPS9), found in Nicotiana tabacum (Common tobacco).